Reading from the N-terminus, the 167-residue chain is Disulfide bond formation protein B (167 aa).

Residues 1 to 12 (MFLNLLDAPRRL) lie on the Cytoplasmic side of the membrane. A helical membrane pass occupies residues 13-29 (LALVALGCVALLAFGLY). The Periplasmic segment spans residues 30–47 (LQHVVGLEPCPMCIVQRY). A disulfide bridge connects residues Cys-39 and Cys-42. Residues 48–63 (ALVLVAIVAGLTAITS) form a helical membrane-spanning segment. Residues 64 to 69 (NKKGLI) lie on the Cytoplasmic side of the membrane. The helical transmembrane segment at 70-87 (TGSGVLLLLAGFGAFVAA) threads the bilayer. The Periplasmic segment spans residues 88-143 (RQSFLQWYPPEVASCGRDFYGMIETFPLQRAIPMIFKGSGDCAKVDWTFLGGSIAN). Cys-102 and Cys-129 are oxidised to a cystine. The helical transmembrane segment at 144-162 (WSFVCFAVIGLTALTLIAR) threads the bilayer. Residues 163-167 (LARQR) lie on the Cytoplasmic side of the membrane.

The protein belongs to the DsbB family.

It localises to the cell inner membrane. Its function is as follows. Required for disulfide bond formation in some periplasmic proteins. Acts by oxidizing the DsbA protein. This chain is Disulfide bond formation protein B, found in Polaromonas naphthalenivorans (strain CJ2).